We begin with the raw amino-acid sequence, 179 residues long: Inosine/xanthosine triphosphatase (179 aa).

A Mg(2+)-binding site is contributed by E71. 71–72 (EA) serves as a coordination point for substrate.

It belongs to the YjjX NTPase family. Homodimer. It depends on Mg(2+) as a cofactor. Requires Mn(2+) as cofactor.

It carries out the reaction XTP + H2O = XDP + phosphate + H(+). It catalyses the reaction ITP + H2O = IDP + phosphate + H(+). Its function is as follows. Phosphatase that hydrolyzes non-canonical purine nucleotides such as XTP and ITP to their respective diphosphate derivatives. Probably excludes non-canonical purines from DNA/RNA precursor pool, thus preventing their incorporation into DNA/RNA and avoiding chromosomal lesions. The sequence is that of Inosine/xanthosine triphosphatase from Shewanella sp. (strain MR-7).